Here is a 257-residue protein sequence, read N- to C-terminus: UPF0246 protein Rsph17025_0016 (257 aa).

It belongs to the UPF0246 family.

This is UPF0246 protein Rsph17025_0016 from Cereibacter sphaeroides (strain ATCC 17025 / ATH 2.4.3) (Rhodobacter sphaeroides).